Reading from the N-terminus, the 317-residue chain is Adenine deaminase (317 aa).

Zn(2+) is bound by residues His-14, His-16, and His-194. Residue Glu-197 is the Proton donor of the active site. Asp-275 contributes to the Zn(2+) binding site. Residue Asp-276 participates in substrate binding.

The protein belongs to the metallo-dependent hydrolases superfamily. Adenosine and AMP deaminases family. Adenine deaminase type 2 subfamily. Requires Zn(2+) as cofactor.

It catalyses the reaction adenine + H2O + H(+) = hypoxanthine + NH4(+). In terms of biological role, catalyzes the hydrolytic deamination of adenine to hypoxanthine. Plays an important role in the purine salvage pathway and in nitrogen catabolism. The sequence is that of Adenine deaminase from Pseudomonas syringae pv. syringae (strain B728a).